We begin with the raw amino-acid sequence, 366 residues long: tRNA/tmRNA (uracil-C(5))-methyltransferase (366 aa).

5 residues coordinate S-adenosyl-L-methionine: Gln-190, Tyr-218, Asn-223, Glu-239, and Asp-299. The active-site Nucleophile is the Cys-324. The Proton acceptor role is filled by Glu-358.

Belongs to the class I-like SAM-binding methyltransferase superfamily. RNA M5U methyltransferase family. TrmA subfamily.

It catalyses the reaction uridine(54) in tRNA + S-adenosyl-L-methionine = 5-methyluridine(54) in tRNA + S-adenosyl-L-homocysteine + H(+). It carries out the reaction uridine(341) in tmRNA + S-adenosyl-L-methionine = 5-methyluridine(341) in tmRNA + S-adenosyl-L-homocysteine + H(+). Its function is as follows. Dual-specificity methyltransferase that catalyzes the formation of 5-methyluridine at position 54 (m5U54) in all tRNAs, and that of position 341 (m5U341) in tmRNA (transfer-mRNA). This is tRNA/tmRNA (uracil-C(5))-methyltransferase from Salmonella paratyphi C (strain RKS4594).